The sequence spans 309 residues: Epidermal retinol dehydrogenase 2 (309 aa).

A helical transmembrane segment spans residues 11–31; sequence LFIFLGKSLFSLLEAMIFALL. Residue 44–68 participates in NADP(+) binding; that stretch reads LITGAGSGLGRLLALQFARLGSVLV. Position 177 (Ser177) interacts with substrate. Tyr190 functions as the Proton acceptor in the catalytic mechanism. A helical transmembrane segment spans residues 270 to 290; the sequence is LLYFMMFLKSFLPLKTGLLIA.

The protein belongs to the short-chain dehydrogenases/reductases (SDR) family. As to expression, detected in adult lung. Detected at low levels in adult brain, heart, testis, placenta, cervix, pancreas, uterus, stomach, rectum, small intestine, colon, esophagus, thymus, skin, and skin keratinocyte. Expression is higher in psoriasis lesions relative to unaffected skin from psoriasis patients. Detected in fetal kidney, skin and lung.

Its subcellular location is the endoplasmic reticulum membrane. It carries out the reaction all-trans-retinol--[retinol-binding protein] + NAD(+) = all-trans-retinal--[retinol-binding protein] + NADH + H(+). The protein operates within cofactor metabolism; retinol metabolism. Oxidoreductase with strong preference for NAD. Active in both the oxidative and reductive directions. Oxidizes all-trans-retinol in all-trans-retinaldehyde. No activity was detected with 11-cis-retinol or 11-cis-retinaldehyde as substrates with either NAD(+)/NADH or NADP(+)/NADPH. The chain is Epidermal retinol dehydrogenase 2 from Homo sapiens (Human).